The sequence spans 120 residues: NAD(P)H-quinone oxidoreductase subunit 3 (120 aa).

3 consecutive transmembrane segments (helical) span residues Leu10–Arg32, Met64–Val84, and Leu89–Val109.

Belongs to the complex I subunit 3 family. NDH-1 can be composed of about 15 different subunits; different subcomplexes with different compositions have been identified which probably have different functions.

It localises to the cellular thylakoid membrane. The catalysed reaction is a plastoquinone + NADH + (n+1) H(+)(in) = a plastoquinol + NAD(+) + n H(+)(out). It catalyses the reaction a plastoquinone + NADPH + (n+1) H(+)(in) = a plastoquinol + NADP(+) + n H(+)(out). In terms of biological role, NDH-1 shuttles electrons from an unknown electron donor, via FMN and iron-sulfur (Fe-S) centers, to quinones in the respiratory and/or the photosynthetic chain. The immediate electron acceptor for the enzyme in this species is believed to be plastoquinone. Couples the redox reaction to proton translocation, and thus conserves the redox energy in a proton gradient. Cyanobacterial NDH-1 also plays a role in inorganic carbon-concentration. This chain is NAD(P)H-quinone oxidoreductase subunit 3, found in Acaryochloris marina (strain MBIC 11017).